A 347-amino-acid chain; its full sequence is NADH-ubiquinone oxidoreductase chain 2 (347 aa).

Helical transmembrane passes span 13–33, 60–80, 96–116, 123–143, 149–169, 178–198, 201–221, 247–267, 274–294, and 326–346; these read IFTG…WVGL, FLTQ…NSML, LMIM…FWVP, PLMS…SIMY, LNVN…SWGG, ILAY…PYNP, TILN…LLNL, TLLS…WVII, NSLI…YFYL, and LPTL…MLMI.

This sequence belongs to the complex I subunit 2 family. As to quaternary structure, core subunit of respiratory chain NADH dehydrogenase (Complex I) which is composed of 45 different subunits. Interacts with TMEM242.

Its subcellular location is the mitochondrion inner membrane. It catalyses the reaction a ubiquinone + NADH + 5 H(+)(in) = a ubiquinol + NAD(+) + 4 H(+)(out). Core subunit of the mitochondrial membrane respiratory chain NADH dehydrogenase (Complex I) which catalyzes electron transfer from NADH through the respiratory chain, using ubiquinone as an electron acceptor. Essential for the catalytic activity and assembly of complex I. The protein is NADH-ubiquinone oxidoreductase chain 2 of Pan troglodytes (Chimpanzee).